The primary structure comprises 70 residues: DNA-directed RNA polymerase subunit epsilon (70 aa).

This sequence belongs to the RNA polymerase subunit epsilon family. In terms of assembly, RNAP is composed of a core of 2 alpha, a beta and a beta' subunit. The core is associated with a delta subunit, and at least one of epsilon or omega. When a sigma factor is associated with the core the holoenzyme is formed, which can initiate transcription.

The catalysed reaction is RNA(n) + a ribonucleoside 5'-triphosphate = RNA(n+1) + diphosphate. A non-essential component of RNA polymerase (RNAP). This is DNA-directed RNA polymerase subunit epsilon from Bacillus cytotoxicus (strain DSM 22905 / CIP 110041 / 391-98 / NVH 391-98).